The following is a 510-amino-acid chain: Aspartate kinase FUB3 (510 aa).

ACT domains are found at residues 372-440 (ILSN…VLPD) and 446-510 (LVGA…KNAI).

The protein belongs to the aspartokinase family.

The catalysed reaction is L-aspartate + ATP = 4-phospho-L-aspartate + ADP. Its pathway is mycotoxin biosynthesis. Aspartate kinase; part of the gene cluster that mediates the biosynthesis of fusaric acid, a mycotoxin with low to moderate toxicity to animals and humans, but with high phytotoxic properties. L-aspartate is suggested as fusaric acid amino acid precursor that is activated and further processed to O-acetyl-L-homoserine by cluster enzymes aspartate kinase FUB3 and homoserine O-acetyltransferase FUB5, as well as enzymes of the primary metabolism. The polyketide synthase (PKS) FUB1 generates the triketide trans-2-hexenal which is presumptively released by the hydrolase FUB4 and linked to the NRPS-bound amino acid precursor by NAD(P)-dependent dehydrogenase FUB6. FUB1, FUB4, and the non-canonical NRPS Fub8 may form an enzyme complex. Further processing of the NRPS-bound intermediate might be carried out by FUB6 and the sulfhydrylase FUB7, enabling a spontaneous electrocyclization to close the carbon backbone of fusaric acid. Dihydrofusaric acid is likely to be released via reduction by the thioester reductase (TR) domain of FUB8 whereupon the final oxidation to fusaric acid may (also) be performed by the FMN-dependent dehydrogenase FUB9. The sequence is that of Aspartate kinase FUB3 from Gibberella fujikuroi (strain CBS 195.34 / IMI 58289 / NRRL A-6831) (Bakanae and foot rot disease fungus).